A 353-amino-acid polypeptide reads, in one-letter code: Holliday junction branch migration complex subunit RuvB (353 aa).

Positions 4 to 190 are large ATPase domain (RuvB-L); sequence TDKLQAPRVI…FGIVARLEFY (187 aa). ATP contacts are provided by residues L29, R30, G71, K74, T75, T76, 137 to 139, R180, Y190, and R227; that span reads EDF. T75 is a binding site for Mg(2+). The small ATPAse domain (RuvB-S) stretch occupies residues 191 to 261; the sequence is TPHELAYIVG…VADAALLMLD (71 aa). The tract at residues 264–353 is head domain (RuvB-H); sequence HLGLDLMDRK…DESAELFSAP (90 aa). DNA contacts are provided by R319 and R324.

It belongs to the RuvB family. In terms of assembly, homohexamer. Forms an RuvA(8)-RuvB(12)-Holliday junction (HJ) complex. HJ DNA is sandwiched between 2 RuvA tetramers; dsDNA enters through RuvA and exits via RuvB. An RuvB hexamer assembles on each DNA strand where it exits the tetramer. Each RuvB hexamer is contacted by two RuvA subunits (via domain III) on 2 adjacent RuvB subunits; this complex drives branch migration. In the full resolvosome a probable DNA-RuvA(4)-RuvB(12)-RuvC(2) complex forms which resolves the HJ.

The protein localises to the cytoplasm. It carries out the reaction ATP + H2O = ADP + phosphate + H(+). Functionally, the RuvA-RuvB-RuvC complex processes Holliday junction (HJ) DNA during genetic recombination and DNA repair, while the RuvA-RuvB complex plays an important role in the rescue of blocked DNA replication forks via replication fork reversal (RFR). RuvA specifically binds to HJ cruciform DNA, conferring on it an open structure. The RuvB hexamer acts as an ATP-dependent pump, pulling dsDNA into and through the RuvAB complex. RuvB forms 2 homohexamers on either side of HJ DNA bound by 1 or 2 RuvA tetramers; 4 subunits per hexamer contact DNA at a time. Coordinated motions by a converter formed by DNA-disengaged RuvB subunits stimulates ATP hydrolysis and nucleotide exchange. Immobilization of the converter enables RuvB to convert the ATP-contained energy into a lever motion, pulling 2 nucleotides of DNA out of the RuvA tetramer per ATP hydrolyzed, thus driving DNA branch migration. The RuvB motors rotate together with the DNA substrate, which together with the progressing nucleotide cycle form the mechanistic basis for DNA recombination by continuous HJ branch migration. Branch migration allows RuvC to scan DNA until it finds its consensus sequence, where it cleaves and resolves cruciform DNA. The protein is Holliday junction branch migration complex subunit RuvB of Aromatoleum aromaticum (strain DSM 19018 / LMG 30748 / EbN1) (Azoarcus sp. (strain EbN1)).